We begin with the raw amino-acid sequence, 467 residues long: MTIAQEPTALNFECETGNYHTFCPISCVAWLYQKIEDSFFLVIGTKTCGYFLQNAMGVMIFAEPRYAMAELEEGDISAQLNDYAELKRLCEQIKRDRNPSVIVWIGTCTTEIIKMDLEGLAPKLEGEIGIPIVVARANGLDYAFTQGEDTVLAAMAHRCPDKAPVAEAEKNERNAVQKLLNFGKKKELVAQEESEYVDHPPLVLFGSLPDPVVTQLTLELKKQGIKVSGWLPAKRFTELPVLEEGYYVAGVNPFLSRTATTLMRRRKCKLIGAPFPIGPDGTRAWIEKICSVFGITPKGLDEREAQIWAGLEDYVKLIRGKSVFFMGDNLLEVSLARFLVRCGMTVQEVGIPYMDKRYQAAELAMLEKACQEMGVPSPKMVEKPDNYNQVQRIYDLKPDLVITGMAHANPLEARGINTKWSVEFTFAQIHGFTNARDILELVTRPLRRNNNLKDLGWDKLVREEAKI.

Residues Cys-23, Cys-48, and Cys-108 each contribute to the [4Fe-4S] cluster site.

Belongs to the BchN/ChlN family. In terms of assembly, protochlorophyllide reductase is composed of three subunits; ChlL, ChlN and ChlB. Forms a heterotetramer of two ChlB and two ChlN subunits. It depends on [4Fe-4S] cluster as a cofactor.

The enzyme catalyses chlorophyllide a + oxidized 2[4Fe-4S]-[ferredoxin] + 2 ADP + 2 phosphate = protochlorophyllide a + reduced 2[4Fe-4S]-[ferredoxin] + 2 ATP + 2 H2O. It participates in porphyrin-containing compound metabolism; chlorophyll biosynthesis (light-independent). Functionally, component of the dark-operative protochlorophyllide reductase (DPOR) that uses Mg-ATP and reduced ferredoxin to reduce ring D of protochlorophyllide (Pchlide) to form chlorophyllide a (Chlide). This reaction is light-independent. The NB-protein (ChlN-ChlB) is the catalytic component of the complex. In Nostoc sp. (strain PCC 7120 / SAG 25.82 / UTEX 2576), this protein is Light-independent protochlorophyllide reductase subunit N.